The following is a 140-amino-acid chain: UPF0225 protein SAV_6631 (140 aa).

A disordered region spans residues Met1–Cys22. Low complexity predominate over residues Thr10–Pro19.

This sequence belongs to the UPF0225 family.

In Streptomyces avermitilis (strain ATCC 31267 / DSM 46492 / JCM 5070 / NBRC 14893 / NCIMB 12804 / NRRL 8165 / MA-4680), this protein is UPF0225 protein SAV_6631.